A 349-amino-acid chain; its full sequence is tRNA pseudouridine synthase D (349 aa).

F27 is a binding site for substrate. D80 functions as the Nucleophile in the catalytic mechanism. N129 contacts substrate. A TRUD domain is found at 155–303 (GVPNYFGAQR…VEAARRAMLL (149 aa)). Substrate is bound at residue F329.

This sequence belongs to the pseudouridine synthase TruD family.

It carries out the reaction uridine(13) in tRNA = pseudouridine(13) in tRNA. Responsible for synthesis of pseudouridine from uracil-13 in transfer RNAs. The protein is tRNA pseudouridine synthase D of Citrobacter koseri (strain ATCC BAA-895 / CDC 4225-83 / SGSC4696).